Reading from the N-terminus, the 478-residue chain is Methionine aminopeptidase 2 (478 aa).

Positions 1 to 123 are disordered; sequence MAGVEEASSF…DPPSVPICDL (123 aa). At Ala2 the chain carries N-acetylalanine. The span at 36–46 shows a compositional bias: basic residues; the sequence is KKKRRKKKKGK. Residues 55-79 are compositionally biased toward basic and acidic residues; sequence ELDKESGTSVDEVAKQLERQALEEK. A phosphoserine; alternate mark is found at Ser60 and Ser63. O-linked (GlcNAc) serine; alternate glycans are attached at residues Ser60 and Ser63. Over residues 80–92 the composition is skewed to acidic residues; sequence EKDDDDEDGDGDG. Over residues 97-109 the composition is skewed to basic residues; sequence GKKKKKKKKKRGP. His231 is a substrate binding site. Asp251, Asp262, and His331 together coordinate a divalent metal cation. His339 provides a ligand contact to substrate. A divalent metal cation contacts are provided by Glu364 and Glu459.

The protein belongs to the peptidase M24A family. Methionine aminopeptidase eukaryotic type 2 subfamily. As to quaternary structure, binds EIF2S1 at low magnesium concentrations. Interacts strongly with the eIF-2 gamma-subunit EIF2S3. Requires Co(2+) as cofactor. It depends on Zn(2+) as a cofactor. The cofactor is Mn(2+). Fe(2+) serves as cofactor. O-glycosylated; contains 12 O-linked GlcNAc. In terms of processing, contains approximately 12 O-linked N-acetylglucosamine (GlcNAc) residues. O-glycosylation is required for EIF2S1 binding.

The protein resides in the cytoplasm. It catalyses the reaction Release of N-terminal amino acids, preferentially methionine, from peptides and arylamides.. Its function is as follows. Cotranslationally removes the N-terminal methionine from nascent proteins. The N-terminal methionine is often cleaved when the second residue in the primary sequence is small and uncharged (Met-Ala-, Cys, Gly, Pro, Ser, Thr, or Val). Functionally, protects eukaryotic initiation factor EIF2S1 from translation-inhibiting phosphorylation by inhibitory kinases such as EIF2AK2/PKR and EIF2AK1/HCR. Plays a critical role in the regulation of protein synthesis. In Rattus norvegicus (Rat), this protein is Methionine aminopeptidase 2 (Metap2).